Consider the following 1171-residue polypeptide: Pyruvate-flavodoxin oxidoreductase (1171 aa).

2 4Fe-4S ferredoxin-type domains span residues 682-711 and 736-767; these read EVPV…PALL and YHLA…MQSL. The [4Fe-4S] cluster site is built by C691, C694, C697, C701, C745, C748, C751, C755, C811, C814, C839, and C1072.

Belongs to the pyruvate:ferredoxin/flavodoxin oxidoreductase family. The cofactor is [4Fe-4S] cluster.

It catalyses the reaction oxidized [flavodoxin] + pyruvate + CoA + 2 H(+) = reduced [flavodoxin] + acetyl-CoA + CO2. Its function is as follows. Oxidoreductase required for the transfer of electrons from pyruvate to flavodoxin, which reduces nitrogenase. The sequence is that of Pyruvate-flavodoxin oxidoreductase (nifJ) from Klebsiella pneumoniae.